The sequence spans 67 residues: MAGQEQQQPQSRDSQVDEDIPEAPPAPPEAQASASTEGVDDLLDEIDGVLESNAEEFVRAFVQKGGQ.

The span at 1–13 (MAGQEQQQPQSRD) shows a compositional bias: low complexity. The interval 1-48 (MAGQEQQQPQSRDSQVDEDIPEAPPAPPEAQASASTEGVDDLLDEIDG) is disordered. The segment at 25–61 (PAPPEAQASASTEGVDDLLDEIDGVLESNAEEFVRAF) is ARC ATPase binding. Positions 38 to 48 (GVDDLLDEIDG) are enriched in acidic residues. Gln-67 bears the Deamidated glutamine mark. An Isoglutamyl lysine isopeptide (Gln-Lys) (interchain with K-? in acceptor proteins) cross-link involves residue Gln-67.

This sequence belongs to the prokaryotic ubiquitin-like protein family. Strongly interacts with the proteasome-associated ATPase ARC through a hydrophobic interface; the interacting region of Pup lies in its C-terminal half. There is one Pup binding site per ARC hexamer ring. Is modified by deamidation of its C-terminal glutamine to glutamate by the deamidase Dop, a prerequisite to the subsequent pupylation process.

Its pathway is protein degradation; proteasomal Pup-dependent pathway. In terms of biological role, protein modifier that is covalently attached to lysine residues of substrate proteins, thereby targeting them for proteasomal degradation. The tagging system is termed pupylation. This chain is Prokaryotic ubiquitin-like protein Pup, found in Pseudarthrobacter chlorophenolicus (strain ATCC 700700 / DSM 12829 / CIP 107037 / JCM 12360 / KCTC 9906 / NCIMB 13794 / A6) (Arthrobacter chlorophenolicus).